The following is a 468-amino-acid chain: Pentatricopeptide repeat-containing protein At5g46680 (468 aa).

PPR repeat units lie at residues 12–46 (STKL…GVLP), 47–81 (DVIT…GIEP), 82–116 (DVTT…GLSP), 117–152 (DMWS…GLVP), 153–183 (GIDT…LKSR), 187–221 (ELMT…GYTP), 222–256 (NAVT…GYTF), 257–291 (DGFA…GTRS), 293–327 (DIVS…GLKP), 328–362 (DDYT…GMQP), 363–393 (SVVT…MEVR), and 394–428 (DEFT…GMKI).

Belongs to the PPR family. P subfamily.

This Arabidopsis thaliana (Mouse-ear cress) protein is Pentatricopeptide repeat-containing protein At5g46680.